Consider the following 187-residue polypeptide: dTTP/UTP pyrophosphatase (187 aa).

Aspartate 64 (proton acceptor) is an active-site residue.

The protein belongs to the Maf family. YhdE subfamily. Requires a divalent metal cation as cofactor.

It is found in the cytoplasm. It carries out the reaction dTTP + H2O = dTMP + diphosphate + H(+). The enzyme catalyses UTP + H2O = UMP + diphosphate + H(+). In terms of biological role, nucleoside triphosphate pyrophosphatase that hydrolyzes dTTP and UTP. May have a dual role in cell division arrest and in preventing the incorporation of modified nucleotides into cellular nucleic acids. In Leptospira interrogans serogroup Icterohaemorrhagiae serovar Lai (strain 56601), this protein is dTTP/UTP pyrophosphatase.